Consider the following 347-residue polypeptide: NADH-ubiquinone oxidoreductase chain 2 (347 aa).

Helical transmembrane passes span proline 3–serine 23, histidine 25–methionine 45, serine 67–leucine 87, asparagine 150–leucine 170, isoleucine 178–proline 198, methionine 201–phenylalanine 221, leucine 237–leucine 257, asparagine 274–methionine 294, and methionine 323–methionine 343.

This sequence belongs to the complex I subunit 2 family. Core subunit of respiratory chain NADH dehydrogenase (Complex I) which is composed of 45 different subunits. Interacts with TMEM242.

It localises to the mitochondrion inner membrane. It carries out the reaction a ubiquinone + NADH + 5 H(+)(in) = a ubiquinol + NAD(+) + 4 H(+)(out). Its function is as follows. Core subunit of the mitochondrial membrane respiratory chain NADH dehydrogenase (Complex I) which catalyzes electron transfer from NADH through the respiratory chain, using ubiquinone as an electron acceptor. Essential for the catalytic activity and assembly of complex I. This Mustela kathiah (Yellow-bellied weasel) protein is NADH-ubiquinone oxidoreductase chain 2.